The following is a 523-amino-acid chain: uncharacterized protein (523 aa).

Residues 193 to 447 (RKCSGCGNCR…ALKRRMIGKR (255 aa)) form the Radical SAM core domain. Residues Cys212, Cys220, and Cys223 each coordinate [4Fe-4S] cluster.

The cofactor is [4Fe-4S] cluster.

This is an uncharacterized protein from Methanopyrus kandleri (strain AV19 / DSM 6324 / JCM 9639 / NBRC 100938).